We begin with the raw amino-acid sequence, 366 residues long: Uroporphyrinogen decarboxylase (366 aa).

Residues 28–32 (RQAGR), Asp78, Tyr160, Thr215, and His333 each bind substrate.

It belongs to the uroporphyrinogen decarboxylase family. Homodimer.

It localises to the cytoplasm. It catalyses the reaction uroporphyrinogen III + 4 H(+) = coproporphyrinogen III + 4 CO2. The protein operates within porphyrin-containing compound metabolism; protoporphyrin-IX biosynthesis; coproporphyrinogen-III from 5-aminolevulinate: step 4/4. In terms of biological role, catalyzes the decarboxylation of four acetate groups of uroporphyrinogen-III to yield coproporphyrinogen-III. The polypeptide is Uroporphyrinogen decarboxylase (Paraburkholderia phytofirmans (strain DSM 17436 / LMG 22146 / PsJN) (Burkholderia phytofirmans)).